A 398-amino-acid polypeptide reads, in one-letter code: UPF0496 protein At5g66660 (398 aa).

Helical transmembrane passes span 240-260 (VFFA…TTMS) and 263-283 (PVVC…GKWF).

This sequence belongs to the UPF0496 family.

The protein resides in the membrane. In Arabidopsis thaliana (Mouse-ear cress), this protein is UPF0496 protein At5g66660.